Consider the following 295-residue polypeptide: Glycine--tRNA ligase alpha subunit (295 aa).

Belongs to the class-II aminoacyl-tRNA synthetase family. As to quaternary structure, tetramer of two alpha and two beta subunits.

The protein localises to the cytoplasm. It carries out the reaction tRNA(Gly) + glycine + ATP = glycyl-tRNA(Gly) + AMP + diphosphate. The sequence is that of Glycine--tRNA ligase alpha subunit (glyQ) from Bacillus subtilis (strain 168).